Consider the following 154-residue polypeptide: Ribonuclease H (154 aa).

One can recognise an RNase H type-1 domain in the interval lysine 7–alanine 148. 4 residues coordinate Mg(2+): aspartate 16, glutamate 54, aspartate 76, and aspartate 140.

It belongs to the RNase H family. As to quaternary structure, monomer. The cofactor is Mg(2+).

The protein localises to the cytoplasm. The enzyme catalyses Endonucleolytic cleavage to 5'-phosphomonoester.. Functionally, endonuclease that specifically degrades the RNA of RNA-DNA hybrids. This chain is Ribonuclease H, found in Paramagnetospirillum magneticum (strain ATCC 700264 / AMB-1) (Magnetospirillum magneticum).